A 565-amino-acid polypeptide reads, in one-letter code: Efflux pump aunC (565 aa).

The span at 1–14 shows a compositional bias: polar residues; the sequence is MSDTARISGGSFTS. Positions 1-57 are disordered; it reads MSDTARISGGSFTSPPGRDVELNSFKEASQTRLYPYSSRKEEEGREDEQQRPEREED. The span at 38–54 shows a compositional bias: basic and acidic residues; it reads SRKEEEGREDEQQRPER. The next 14 helical transmembrane spans lie at 59-79, 103-123, 128-148, 164-184, 194-214, 222-242, 257-277, 293-313, 335-355, 378-398, 399-419, 425-445, 457-477, and 530-550; these read GALT…CIFC, DVGW…LPFG, FFPI…GSFI, VAGL…TQCV, GFIM…GGAF, WCFY…FFTF, AAGL…CLLL, IIAL…LQLW, LYGF…PIWF, VIFA…GPFM, LLSA…HPSS, IGYQ…PVFV, TATA…VSVA, and VHTF…ATVI.

Belongs to the major facilitator superfamily. TCR/Tet family.

It localises to the cell membrane. Efflux pump; part of the gene cluster that mediates the biosynthesis of aurasperone B, a dimeric gamma-naphthopyrone. This is Efflux pump aunC from Aspergillus niger (strain ATCC MYA-4892 / CBS 513.88 / FGSC A1513).